Reading from the N-terminus, the 1254-residue chain is MATPLPDFETARGGGAVASSSTTVLPSSVSSSSSSSRPLPVANSFSDDAEEISPILIFLFFHKAVCSELEALHRLALEFATGHHVDLRLLRERYRFLRSIYKHHCNAEDEVIFSALDIRVKNVAQTYSLEHKGESNLFDHLFELLNSATETDESYRRELARSTGALQTSVSQHLAKEQKQVFPLLIEKFKYEEQAYIVWRFLCSIPVNMLAVFLPWISSSISVDESKEMQTCLKKIVPGEKLLQQVIFTWLGGKSNTVASCRIEDSMFQCCLDSSSSMLPCKASREQCACEGSKIGKRKYPELTNFGSSDTLHPVDEIKLWHKSINKEMKEIADEARKIQLSGDFSDLSAFDERLQYIAEVCIFHSLAEDKIIFPAVDGEFSFSEEHDEEENQFNEFRCLIENIKSAGASSTSAAEFYTKLCSHADQIMETIQRHFHNEEIQVLPLARKNFSFKRQQELLYQSLCIMPLRLIERVLPWLTASLTEDEAKNFLKNLQAGAPKSDVALVTLFSGWACKGRKAGECLSPNGNGLCPVKTLSNIKEVNLQSCNACASVPCTSRSTKSCCQHQDKRPAKRTAVLSCEKKTTPHSTEVANGCKPSGNGRSCCVPDLGVNNNCLELGSLPAAKAMRSSSLNSAAPALNSSLFIWEMDSNSFGTGHAERPVATIFKFHKAISKDLEFLDVESGKLIDCDGTFIRQFIGRFHLLWGFYKAHSNAEDDILFPALESKETLHNVSHSYTLDHKQEEKLFGDIYSVLTELSILHEKLQSDSMMEDIAQTDTVRTDIDNGDCNKKYNELATKLQGMCKSIKITLDQHIFLEELELWPLFDKHFSIQEQDKIVGRIIGTTGAEVLQSMLPWVTSALSEDEQNRMMDTWKQATKNTMFDEWLNECWKGSPDSSSTETSKPSPQKDNDHQEILDQSGELFKPGWKDIFRMNQNELEAEIRKVYQDSTLDPRRKDYLVQNWRTSRWIAAQQKLPKEAETAVNGDVELGCSPSFRDPEKQIYGCEHYKRNCKLRAACCDQLFTCRFCHDKVSDHSMDRKLVTEMLCMRCLKVQPVGPICTTPSCDGFPMAKHYCSICKLFDDERAVYHCPFCNLCRVGEGLGIDFFHCMTCNCCLGMKLVNHKCLEKSLETNCPICCEFLFTSSEAVRALPCGHYMHSACFQAYTCSHYTCPICGKSLGDMAVYFGMLDALLAAEELPEEYKNRCQDILCNDCERKGTTRFHWLYHKCGSCGSYNTRVIKSETIPPDCSTSS.

Residues 1 to 40 (MATPLPDFETARGGGAVASSSTTVLPSSVSSSSSSSRPLP) form a disordered region. Low complexity predominate over residues 19–40 (SSSTTVLPSSVSSSSSSSRPLP). A helical membrane pass occupies residues 201–221 (FLCSIPVNMLAVFLPWISSSI). The segment at 893-913 (GSPDSSSTETSKPSPQKDNDH) is disordered. Positions 895 to 906 (PDSSSTETSKPS) are enriched in polar residues. The segment at 999-1068 (PEKQIYGCEH…PICTTPSCDG (70 aa)) adopts a CHY-type zinc-finger fold. The Zn(2+) site is built by cysteine 1006, histidine 1008, cysteine 1019, cysteine 1020, cysteine 1026, cysteine 1029, histidine 1030, histidine 1036, cysteine 1048, cysteine 1051, cysteine 1061, cysteine 1066, cysteine 1076, cysteine 1079, histidine 1090, cysteine 1091, cysteine 1094, cysteine 1097, histidine 1109, cysteine 1110, cysteine 1113, cysteine 1116, histidine 1124, and cysteine 1126. The CTCHY-type zinc finger occupies 1071–1134 (MAKHYCSICK…KCLEKSLETN (64 aa)). The RING-type; atypical zinc finger occupies 1135-1176 (CPICCEFLFTSSEAVRALPCGHYMHSACFQAYTCSHYTCPIC).

As to quaternary structure, interacts with the PYEL proteins bHLH115, bHLH104 and ILR3 in the nucleus. Binds zinc and iron ions. Expressed in cotyledons of seedlings, young leaves, developing and mature embryos, and other reproductive tissues including floral vasculature, funiculus, septum, and gynoecium valves.

The protein resides in the membrane. It is found in the nucleus. It participates in protein modification; protein ubiquitination. In terms of biological role, essential protein. Negatively regulates the response to iron deficiency and thus contributes to iron homeostasis. Exhibits E3 ubiquitin-protein ligase activity in vitro. Plays a role in root growth, rhizosphere acidification, and iron reductase activity in response to iron deprivation. Facilitates 26S proteasome-mediated degradation of PYEL proteins in the absence of iron. In Arabidopsis thaliana (Mouse-ear cress), this protein is Zinc finger protein BRUTUS.